The sequence spans 147 residues: Cytochrome c oxidase subunit 3 (147 aa).

A run of 4 helical transmembrane segments spans residues 13-33 (FQIP…VTWA), 48-68 (GLFI…YEYF), 83-103 (FFMA…FLLI), and 125-145 (AWYW…IYWW).

Belongs to the cytochrome c oxidase subunit 3 family. Component of the cytochrome c oxidase (complex IV, CIV), a multisubunit enzyme composed of a catalytic core of 3 subunits and several supernumerary subunits. The complex exists as a monomer or a dimer and forms supercomplexes (SCs) in the inner mitochondrial membrane with ubiquinol-cytochrome c oxidoreductase (cytochrome b-c1 complex, complex III, CIII).

The protein resides in the mitochondrion inner membrane. The enzyme catalyses 4 Fe(II)-[cytochrome c] + O2 + 8 H(+)(in) = 4 Fe(III)-[cytochrome c] + 2 H2O + 4 H(+)(out). Its function is as follows. Component of the cytochrome c oxidase, the last enzyme in the mitochondrial electron transport chain which drives oxidative phosphorylation. The respiratory chain contains 3 multisubunit complexes succinate dehydrogenase (complex II, CII), ubiquinol-cytochrome c oxidoreductase (cytochrome b-c1 complex, complex III, CIII) and cytochrome c oxidase (complex IV, CIV), that cooperate to transfer electrons derived from NADH and succinate to molecular oxygen, creating an electrochemical gradient over the inner membrane that drives transmembrane transport and the ATP synthase. Cytochrome c oxidase is the component of the respiratory chain that catalyzes the reduction of oxygen to water. Electrons originating from reduced cytochrome c in the intermembrane space (IMS) are transferred via the dinuclear copper A center (CU(A)) of subunit 2 and heme A of subunit 1 to the active site in subunit 1, a binuclear center (BNC) formed by heme A3 and copper B (CU(B)). The BNC reduces molecular oxygen to 2 water molecules using 4 electrons from cytochrome c in the IMS and 4 protons from the mitochondrial matrix. The chain is Cytochrome c oxidase subunit 3 (COIII) from Spodoptera frugiperda (Fall armyworm).